The sequence spans 100 residues: Protein Vpr (100 aa).

The segment at 1–42 (MEQALENQGPAREPFNEWTLELLEELKEEAVRHFPRPWLQAC) is homooligomerization. Ser79, Ser98, and Ser100 each carry phosphoserine; by host.

Belongs to the HIV-1 VPR protein family. Homooligomer, may form homodimer. Interacts with p6-gag region of the Pr55 Gag precursor protein through a (Leu-X-X)4 motif near the C-terminus of the P6gag protein. Interacts with host UNG. May interact with host RAD23A/HHR23A. Interacts with host VPRBP/DCAF1, leading to hijack the CUL4A-RBX1-DDB1-DCAF1/VPRBP complex, mediating ubiquitination of host proteins such as TERT and ZGPAT and arrest of the cell cycle in G2 phase. Post-translationally, phosphorylated on several residues by host. These phosphorylations regulate VPR activity for the nuclear import of the HIV-1 pre-integration complex.

The protein resides in the virion. It localises to the host nucleus. The protein localises to the host extracellular space. Its function is as follows. During virus replication, may deplete host UNG protein, and incude G2-M cell cycle arrest. Acts by targeting specific host proteins for degradation by the 26S proteasome, through association with the cellular CUL4A-DDB1 E3 ligase complex by direct interaction with host VPRPB/DCAF-1. Cell cycle arrest reportedly occurs within hours of infection and is not blocked by antiviral agents, suggesting that it is initiated by the VPR carried into the virion. Additionally, VPR induces apoptosis in a cell cycle dependent manner suggesting that these two effects are mechanistically linked. Detected in the serum and cerebrospinal fluid of AIDS patient, VPR may also induce cell death to bystander cells. Functionally, during virus entry, plays a role in the transport of the viral pre-integration (PIC) complex to the host nucleus. This function is crucial for viral infection of non-dividing macrophages. May act directly at the nuclear pore complex, by binding nucleoporins phenylalanine-glycine (FG)-repeat regions. This Human immunodeficiency virus type 1 group O (isolate MVP5180) (HIV-1) protein is Protein Vpr.